We begin with the raw amino-acid sequence, 131 residues long: Translation initiation factor 5A (131 aa).

K37 carries the hypusine modification.

Belongs to the eIF-5A family.

The protein localises to the cytoplasm. Functionally, functions by promoting the formation of the first peptide bond. This is Translation initiation factor 5A (eIF5A) from Methanococcus maripaludis (strain C6 / ATCC BAA-1332).